Reading from the N-terminus, the 540-residue chain is CBL-interacting protein kinase 12 (540 aa).

Residues 1–23 (MLMATVSPARREPTPQAVRASPM) form a disordered region. One can recognise a Protein kinase domain in the interval 46–300 (YELGRVLGQG…VPEIIESDWF (255 aa)). Residues 52–60 (LGQGSFAKV) and Lys-75 each bind ATP. Asp-168 acts as the Proton acceptor in catalysis. An activation loop region spans residues 186–215 (DFGLAAGPDQFDPDGLLHTFCGTPAYVAPE). Residues 333–348 (PPPLGLAPPVPPPPQG) show a composition bias toward pro residues. Residues 333–380 (PPPLGLAPPVPPPPQGDDPDGSGSESDSSVVSCPATLSTGESQRVRGS) are disordered. Residues 353-364 (GSGSESDSSVVS) are compositionally biased toward low complexity. The 37-residue stretch at 370–406 (STGESQRVRGSLPRPASLNAFDIISFSKGFNLSGLFE) folds into the NAF domain. Positions 409–438 (GNEIRFVSGEPMSDIVKKLEEIAKVKSFTV) are PPI.

It belongs to the protein kinase superfamily. CAMK Ser/Thr protein kinase family. SNF1 subfamily. Mg(2+) serves as cofactor. Post-translationally, autophosphorylated. Expressed at low levels in leaf blades.

It catalyses the reaction L-seryl-[protein] + ATP = O-phospho-L-seryl-[protein] + ADP + H(+). The catalysed reaction is L-threonyl-[protein] + ATP = O-phospho-L-threonyl-[protein] + ADP + H(+). Its function is as follows. Involved in drought stress tolerance. CIPK serine-threonine protein kinases interact with CBL proteins. Binding of a CBL protein to the regulatory NAF domain of CIPK protein lead to the activation of the kinase in a calcium-dependent manner. The sequence is that of CBL-interacting protein kinase 12 (CIPK12) from Oryza sativa subsp. japonica (Rice).